The primary structure comprises 509 residues: Ribonuclease E/G-like protein (509 aa).

The S1 motif domain occupies Ser35 to Arg117. 2 residues coordinate Mg(2+): Asp296 and Asp339.

This sequence belongs to the RNase E/G family. Requires Mg(2+) as cofactor.

It is found in the plastid. It localises to the chloroplast stroma. Functionally, involved in intercistronic processing of primary transcripts from chloroplast operons. The endonucleolytic activity of the enzyme depends on the number of phosphates at the 5' end, is inhibited by structured RNA, and preferentially cleaves A/U-rich sequences. The sequence is that of Ribonuclease E/G-like protein (rne) from Pyropia yezoensis (Susabi-nori).